Here is a 337-residue protein sequence, read N- to C-terminus: Tryptophan--tRNA ligase (337 aa).

ATP is bound by residues 11-13 and 19-20; these read QPT and GN. The 'HIGH' region signature appears at 12–20; the sequence is PTGNLHLGN. Asp-135 lines the L-tryptophan pocket. ATP-binding positions include 147–149, Val-190, and 199–203; these read GED and KMSKS. Positions 199–203 match the 'KMSKS' region motif; sequence KMSKS.

This sequence belongs to the class-I aminoacyl-tRNA synthetase family. In terms of assembly, homodimer.

It is found in the cytoplasm. The catalysed reaction is tRNA(Trp) + L-tryptophan + ATP = L-tryptophyl-tRNA(Trp) + AMP + diphosphate + H(+). Catalyzes the attachment of tryptophan to tRNA(Trp). This is Tryptophan--tRNA ligase from Synechocystis sp. (strain ATCC 27184 / PCC 6803 / Kazusa).